A 960-amino-acid polypeptide reads, in one-letter code: MSDLETVAKFLAESVIASTAKTSERNLRQLETQDGFGLTLLHVIASTNLPLSTRLAGALFFKNFIKRKWVDENGNHLLPANNVELIKKEIVPLMISLPNNLQVQIGEAISSIADSDFPDRWPTLLSDLASRLSNDDMVTNKGVLTVAHSIFKRWRPLFRSDELFLEIKLVLDVFTAPFLNLLKTVDEQITANENNKASLNILFDVLLVLIKLYYDFNCQDIPEFFEDNIQVGMGIFHKYLSYSNPLLEDPDETEHASVLIKVKSSIQELVQLYTTRYEDVFGPMINEFIQITWNLLTSISNQPKYDILVSKSLSFLTAVTRIPKYFEIFNNESAMNNITEQIILPNVTLREEDVELFEDDPIEYIRRDLEGSDTDTRRRACTDFLKELKEKNEVLVTNIFLAHMKGFVDQYMSDPSKNWKFKDLYIYLFTALAINGNITNAGVSSTNNLLNVVDFFTKEIAPDLTSNNIPHIILRVDAIKYIYTFRNQLTKAQLIELMPILATFLQTDEYVVYTYAAITIEKILTIRESNTSPAFIFHKEDISNSTEILLKNLIALILKHGSSPEKLAENEFLMRSIFRVLQTSEDSIQPLFPQLLAQFIEIVTIMAKNPSNPRFTHYTFESIGAILNYTQRQNLPLLVDSMMPTFLTVFSEDIQEFIPYVFQIIAFVVEQSATIPESIKPLAQPLLAPNVWELKGNIPAVTRLLKSFIKTDSSIFPDLVPVLGIFQRLIASKAYEVHGFDLLEHIMLLIDMNRLRPYIKQIAVLLLQRLQNSKTERYVKKLTVFFGLISNKLGSDFLIHFIDEVQDGLFQQIWGNFIITTLPTIGNLLDRKIALIGVLNMVINGQFFQSKYPTLISSTMNSIIETASSQSIANLKNDYVDLDNLEEISTFGSHFSKLVSISEKPFDPLPEIDVNNGVRLYVAEALNKYNAISGNTFLNTILPQLTQENQVKLNQLLVGN.

HEAT repeat units follow at residues 1–33 (MSDLETVAKFLAESVIASTAKTSERNLRQLETQ), 34–73 (DGFGLTLLHVIASTNLPLSTRLAGALFFKNFIKRKWVDEN), 74–120 (GNHL…FPDR), 121–157 (WPTLLSDLASRLSNDDMVTNKGVLTVAHSIFKRWRPL), 158–220 (FRSD…NCQD), 221–278 (IPEF…TRYE), 279–323 (DVFG…TRIP), 324–392 (KYFE…KEKN), 393–445 (EVLV…GVSS), 446–489 (TNNL…RNQL), 490–528 (TKAQLIELMPILATFLQTDEYVVYTYAAITIEKILTIRE), 529–586 (SNTS…TSED), 587–630 (SIQP…LNYT), 631–674 (QRQN…QSAT), 675–716 (IPES…SSIF), 717–751 (PDLVPVLGIFQRLIASKAYEVHGFDLLEHIMLLID), 752–794 (MNRL…NKLG), and 795–826 (SDFLIHFIDEVQDGLFQQIWGNFIITTLPTIG). In terms of domain architecture, Importin N-terminal spans 23 to 96 (SERNLRQLET…KKEIVPLMIS (74 aa)). A Nuclear localization signal motif is present at residues 366-381 (RRDLEGSDTDTRRRAC). Residues 827 to 928 (NLLDRKIALI…RLYVAEALNK (102 aa)) form an HEAT 19; with insert repeat. Residues 929–960 (YNAISGNTFLNTILPQLTQENQVKLNQLLVGN) form an HEAT 20 repeat.

It belongs to the XPO2/CSE1 family. As to quaternary structure, binds with high affinity to SRP1 only in the presence of RanGTP. The complex is dissociated by the RanGTP-binding protein YRB1.

It localises to the cytoplasm. It is found in the nucleus. Export receptor for importin alpha (SRP1). Mediates importin-alpha re-export from the nucleus to the cytoplasm after import substrates have been released into the nucleoplasm. The chain is Importin alpha re-exporter (CSE1) from Saccharomyces cerevisiae (strain ATCC 204508 / S288c) (Baker's yeast).